Reading from the N-terminus, the 34-residue chain is Corticostatin-6 (34 aa).

3 disulfide bridges follow: C3/C31, C5/C20, and C10/C30.

Belongs to the alpha-defensin family. In terms of tissue distribution, lung, spleen, small intestine, pituitary gland, adrenal medulla and plasma.

It is found in the secreted. Microbicidal activity and inhibits corticotropin (ACTH) stimulated corticosterone production. This Oryctolagus cuniculus (Rabbit) protein is Corticostatin-6.